The sequence spans 141 residues: Nucleoside diphosphate kinase (141 aa).

ATP is bound by residues K11, F59, R87, T93, R104, and N114. The active-site Pros-phosphohistidine intermediate is H117.

This sequence belongs to the NDK family. In terms of assembly, homotetramer. Mg(2+) is required as a cofactor.

The protein resides in the cytoplasm. It carries out the reaction a 2'-deoxyribonucleoside 5'-diphosphate + ATP = a 2'-deoxyribonucleoside 5'-triphosphate + ADP. It catalyses the reaction a ribonucleoside 5'-diphosphate + ATP = a ribonucleoside 5'-triphosphate + ADP. Functionally, major role in the synthesis of nucleoside triphosphates other than ATP. The ATP gamma phosphate is transferred to the NDP beta phosphate via a ping-pong mechanism, using a phosphorylated active-site intermediate. The protein is Nucleoside diphosphate kinase of Teredinibacter turnerae (strain ATCC 39867 / T7901).